Reading from the N-terminus, the 281-residue chain is Pantothenate synthetase (281 aa).

Methionine 30–histidine 37 is an ATP binding site. The Proton donor role is filled by histidine 37. Glutamine 61 provides a ligand contact to (R)-pantoate. A beta-alanine-binding site is contributed by glutamine 61. Residue glycine 147–aspartate 150 participates in ATP binding. A (R)-pantoate-binding site is contributed by glutamine 153. Residues valine 176 and methionine 184 to arginine 187 each bind ATP.

The protein belongs to the pantothenate synthetase family. Homodimer.

It is found in the cytoplasm. The enzyme catalyses (R)-pantoate + beta-alanine + ATP = (R)-pantothenate + AMP + diphosphate + H(+). It participates in cofactor biosynthesis; (R)-pantothenate biosynthesis; (R)-pantothenate from (R)-pantoate and beta-alanine: step 1/1. Its function is as follows. Catalyzes the condensation of pantoate with beta-alanine in an ATP-dependent reaction via a pantoyl-adenylate intermediate. This is Pantothenate synthetase from Oleidesulfovibrio alaskensis (strain ATCC BAA-1058 / DSM 17464 / G20) (Desulfovibrio alaskensis).